Reading from the N-terminus, the 542-residue chain is Phosphoacetylglucosamine mutase (542 aa).

Residue M1 is modified to N-acetylmethionine. T62 carries the post-translational modification Phosphothreonine. Residue S64 is the Phosphoserine intermediate of the active site. Mg(2+) contacts are provided by S64, D276, D278, and D280. A Phosphoserine modification is found at S64. Residues 370–372 (EAN), 496–500 (RPSGT), and R505 each bind substrate.

It belongs to the phosphohexose mutase family. It depends on Mg(2+) as a cofactor. As to expression, found in many tissues except lung. Relatively high expression in pancreas, heart, liver, and placenta, and relatively low expression in brain, skeletal muscle and kidney.

It carries out the reaction N-acetyl-alpha-D-glucosamine 1-phosphate = N-acetyl-D-glucosamine 6-phosphate. It functions in the pathway nucleotide-sugar biosynthesis; UDP-N-acetyl-alpha-D-glucosamine biosynthesis; N-acetyl-alpha-D-glucosamine 1-phosphate from alpha-D-glucosamine 6-phosphate (route I): step 2/2. Functionally, catalyzes the conversion of GlcNAc-6-P into GlcNAc-1-P during the synthesis of uridine diphosphate/UDP-GlcNAc, a sugar nucleotide critical to multiple glycosylation pathways including protein N- and O-glycosylation. The chain is Phosphoacetylglucosamine mutase from Homo sapiens (Human).